Here is a 1666-residue protein sequence, read N- to C-terminus: Probable clathrin heavy chain (1666 aa).

WD40-like repeat stretches follow at residues S24–S67, A68–D107, V108–N148, G149–E194, S195–V255, N256–E299, and S300–N328. T392 is modified (phosphothreonine). S393 carries the post-translational modification Phosphoserine. CHCR repeat units follow at residues M534–V680, A683–L825, L830–Q969, V975–A1120, Y1124–A1265, L1270–T1415, and L1418–F1561.

It belongs to the clathrin heavy chain family. As to quaternary structure, clathrin triskelions, composed of 3 heavy chains and 3 light chains, are the basic subunits of the clathrin coat.

Its subcellular location is the cytoplasmic vesicle membrane. It localises to the membrane. The protein localises to the coated pit. Its function is as follows. Clathrin is the major protein of the polyhedral coat of coated pits and vesicles. In Schizosaccharomyces pombe (strain 972 / ATCC 24843) (Fission yeast), this protein is Probable clathrin heavy chain (chc1).